The chain runs to 275 residues: Translation initiation factor 2 subunit alpha (275 aa).

An S1 motif domain is found at 12–83; it reads GEFVIATVKS…NKGHIDLSLK (72 aa).

This sequence belongs to the eIF-2-alpha family. As to quaternary structure, heterotrimer composed of an alpha, a beta and a gamma chain.

EIF-2 functions in the early steps of protein synthesis by forming a ternary complex with GTP and initiator tRNA. The sequence is that of Translation initiation factor 2 subunit alpha from Thermococcus onnurineus (strain NA1).